The sequence spans 2449 residues: Nonribisomal peptide synthetase phqB (2449 aa).

The tract at residues 253-654 is adenylation 1; the sequence is IQVHSGPGRL…GRRDTVVKIR (402 aa). The Carrier 1 domain maps to 795–870; it reads LPMTPNEDVL…LRTVAKEARP (76 aa). Serine 815 bears the O-(pantetheine 4'-phosphoryl)serine mark. Residues 913 to 1337 are condensation 1; it reads QDIYPTTPLQ…LISDRDSELL (425 aa). Residues 1357 to 1756 are adenylation 2; sequence EAQVTRNPSK…TFTFLGRTNQ (400 aa). A Carrier 2 domain is found at 1915 to 1993; it reads WALSKHIGQL…MVAEMIDRTP (79 aa). At serine 1952 the chain carries O-(pantetheine 4'-phosphoryl)serine. The interval 2041 to 2297 is reductase (R) domain; that stretch reads LTGATGFLGT…VAAVDWVASL (257 aa). Residues threonine 2045, methionine 2249, and asparagine 2259 each contribute to the NADPH site.

This sequence belongs to the NRP synthetase family.

Its pathway is alkaloid biosynthesis. Its function is as follows. Nonribisomal peptide synthetase; part of the gene cluster that mediates the biosynthesis of paraherquamide, a fungal indole alkaloid that belongs to a family of natural products containing a characteristic bicyclo[2.2.2]diazaoctane core. The first steps in the biosynthesis of paraherquamide is the production of the beta-methyl-proline precursor from L-isoleucine. They require oxidation of a terminally hydroxylated L-isoleucine to the corresponding aldehyde by enzymes which have still to be identified. Spontaneous cyclization and dehydration would yield the 4-methyl pyrolline-5-carboxylic acid, which is then reduced by the pyrroline-5-carboxylate reductase phqD leading to the beta-methyl-proline precursor. The next step of paraherquamide biosynthesis involves coupling of beta-methyl-proline and L-tryptophan by the bimodular NRPS phqB, to produce a monooxopiperazine intermediate. The reductase (R) domain of phqB utilizes NADPH for hydride transfer to reduce the thioester bond of the T domain-tethered linear dipeptide to a hemithioaminal intermediate, which spontaneously cleaves the C-S bond to release the aldehyde product. This compound undergoes spontaneous cyclization and dehydration to give a dienamine which is reverse prenylated at C-2 by the reverse prenyltransferase phqJ. The other prenyltransferase present in the cluster, phqI may be a redundant gene in the pathway. During biosynthetic assembly, the key step to produce the polycyclic core is catalyzed by the bifunctional reductase and intramolecular [4+2] Diels-Alderase, phqE, resulting in formation of the [2.2.2] diazaoctane intermediate preparaherquamide. Following formation of preparaherquamide, an indole 2,3-epoxidation-initiated pinacol-like rearrangement is catalyzed by the phqK FAD-dependent monooxygenase. The prenyltransferase phqA, the cytochrome P450 monooxygenase phqL, and the FAD-linked oxidoreductase phqH (or the cytochrome P450 monooxygenase phqM), are proposed to be involved in the formation of the pyran ring. The FAD-dependent monooxygenase phqK is likely responsible for generation of the spiro-oxindole, and the N-methylation is likely mediated by the phqN methyltransferase leading to the isolable natural product paraherquamide F. However, the order of these biosynthetic steps has still to be determined. In late-stage paraherquamide biosynthesis, the third P450 monooxygenase, phqO, is probably responsible for the C-14 hydroxylation, transforming paraherquamide F to paraherquamide G, and paraherquamide E to the final product paraherquamide A. The expansion from the 6-membered ring pyran (in paraherquamides F and G) to the 7-membered dioxepin ring (in paraherquamides A and E) represents a poorly understood but intriguing process that probably involves the 2-oxoglutarate-dependent dioxygenase phqC. Finally, the remaining members of the paraherquamide cluster, including phqI as well as phqM (or phqH), do not have a clearly prescribed role and appear to be redundant. The chain is Nonribisomal peptide synthetase phqB from Penicillium fellutanum.